The chain runs to 194 residues: Probable nicotinate-nucleotide adenylyltransferase (194 aa).

Belongs to the NadD family.

The enzyme catalyses nicotinate beta-D-ribonucleotide + ATP + H(+) = deamido-NAD(+) + diphosphate. Its pathway is cofactor biosynthesis; NAD(+) biosynthesis; deamido-NAD(+) from nicotinate D-ribonucleotide: step 1/1. Functionally, catalyzes the reversible adenylation of nicotinate mononucleotide (NaMN) to nicotinic acid adenine dinucleotide (NaAD). The sequence is that of Probable nicotinate-nucleotide adenylyltransferase from Christiangramia forsetii (strain DSM 17595 / CGMCC 1.15422 / KT0803) (Gramella forsetii).